Consider the following 84-residue polypeptide: Small ribosomal subunit protein uS17 (84 aa).

It belongs to the universal ribosomal protein uS17 family. Part of the 30S ribosomal subunit.

Functionally, one of the primary rRNA binding proteins, it binds specifically to the 5'-end of 16S ribosomal RNA. This chain is Small ribosomal subunit protein uS17, found in Serratia proteamaculans (strain 568).